The following is a 328-amino-acid chain: uncharacterized protein (328 aa).

An N-terminal signal peptide occupies residues 1 to 32 (MFNFRLFSRRGKSLGLLAIVLLLFGFYSLKSS).

This sequence belongs to the glycosyltransferase 34 family.

It is found in the endoplasmic reticulum. This is an uncharacterized protein from Schizosaccharomyces pombe (strain 972 / ATCC 24843) (Fission yeast).